Reading from the N-terminus, the 200-residue chain is Ependymin-related protein 1 (200 aa).

The N-terminal stretch at 1–17 (MILQAALFLAGLTVVSG) is a signal peptide. N-linked (GlcNAc...) asparagine glycosylation is found at Asn36, Asn124, and Asn136.

This sequence belongs to the ependymin family. Component of the acid-soluble and acid-insoluble organic matrix of prismatic shell layers (at protein level). Expressed discontinuously in the anterior zone of the outer fold of the mantle where its expression correlates with shell pigmentation.

Its subcellular location is the secreted. This chain is Ependymin-related protein 1, found in Haliotis asinina (Donkey's ear abalone).